The primary structure comprises 375 residues: Squamosa promoter-binding-like protein 9 (375 aa).

Disordered stretches follow at residues 1–30 (MEMGSNSGPGHGPGQAESGGSSTESSSFSG) and 43–73 (GGGGSGSSSSGGRSNRRVRGGGSGQSGQIPR). Residues 18 to 30 (SGGSSTESSSFSG) are compositionally biased toward low complexity. The segment at 71–148 (IPRCQVEGCG…AGHNERRRKP (78 aa)) adopts an SBP-type zinc-finger fold. Cys-74, Cys-79, Cys-96, His-99, Cys-115, Cys-118, His-122, and Cys-134 together coordinate Zn(2+). The Bipartite nuclear localization signal motif lies at 131-147 (KRSCRRRLAGHNERRRK). Disordered regions lie at residues 252 to 278 (LLSNPHQPHDNNNNNNNNNNNNNNTWR) and 345 to 375 (SDHHHQSRRQYMEDENTRAYDSSSHHTNWSL). A compositionally biased stretch (low complexity) spans 262 to 275 (NNNNNNNNNNNNNN). The segment covering 345–362 (SDHHHQSRRQYMEDENTR) has biased composition (basic and acidic residues). Residues 363–375 (AYDSSSHHTNWSL) are compositionally biased toward polar residues.

Zn(2+) serves as cofactor.

The protein localises to the nucleus. It localises to the cytoplasm. Its function is as follows. Trans-acting factor that binds specifically to the consensus nucleotide sequence 5'-TNCGTACAA-3'. The polypeptide is Squamosa promoter-binding-like protein 9 (SPL9) (Arabidopsis thaliana (Mouse-ear cress)).